The primary structure comprises 173 residues: Peptide deformylase (173 aa).

Positions 91 and 133 each coordinate Fe cation. E134 is a catalytic residue. H137 lines the Fe cation pocket.

Belongs to the polypeptide deformylase family. Fe(2+) is required as a cofactor.

The catalysed reaction is N-terminal N-formyl-L-methionyl-[peptide] + H2O = N-terminal L-methionyl-[peptide] + formate. In terms of biological role, removes the formyl group from the N-terminal Met of newly synthesized proteins. Requires at least a dipeptide for an efficient rate of reaction. N-terminal L-methionine is a prerequisite for activity but the enzyme has broad specificity at other positions. This chain is Peptide deformylase, found in Buchnera aphidicola subsp. Acyrthosiphon pisum (strain 5A).